We begin with the raw amino-acid sequence, 637 residues long: Keratin, type II cytoskeletal 1 (637 aa).

The tract at residues 1-187 is head; the sequence is MSLQCSSRSL…DPQIQKVKSQ (187 aa). An Omega-N-methylarginine modification is found at Arg12. Residues Ser21 and Ser24 each carry the phosphoserine modification. Omega-N-methylarginine is present on Arg49. The residue at position 67 (Ser67) is a Phosphoserine. The stretch at 180-328 forms a coiled coil; sequence QIQKVKSQER…DIDFFSALYQ (149 aa). Residues 188–223 form a coil 1A region; sequence EREQIKSLNDKFASFIDKVRFLEQQNQVLQTKWELL. In terms of domain architecture, IF rod spans 188-501; the sequence is EREQIKSLND…KLLEGEEIRM (314 aa). Positions 224–243 are linker 1; it reads QQVDTTTRTQNLDPFFENYI. The coil 1B stretch occupies residues 244-334; sequence SILRRKVDSL…ALYQMEMSQM (91 aa). Lys284 bears the N6,N6-dimethyllysine mark. Positions 335 to 358 are linker 12; that stretch reads QTQISETNVVLSMDNNRSLDLDGI. Ser352 carries the post-translational modification Phosphoserine. Residues 359-497 form a coil 2 region; that stretch reads ISEVKAQYDS…ATYKKLLEGE (139 aa). The stretch at 397–483 forms a coiled coil; sequence DSVRNTKMEI…QELMNTKLAL (87 aa). The tract at residues 498–637 is tail; that stretch reads EIRMSGECTP…VSTSYSRGTK (140 aa). Disordered stretches follow at residues 505 to 533 and 563 to 637; these read CTPN…SGGG and YGGG…RGTK. The segment covering 509–524 has biased composition (low complexity); the sequence is VSVSVSTSHTSMSGSS. Omega-N-methylarginine occurs at positions 526, 585, and 607. Over residues 563–618 the composition is skewed to gly residues; sequence YGGGSGGGSYGGGSGGGSSGSHRGGSGGGGGSSGGSYGGSSGGGRGGSSSGGGGVK. Residues 624-637 show a composition bias toward polar residues; the sequence is TVKFVSTSYSRGTK.

This sequence belongs to the intermediate filament family. As to quaternary structure, heterotetramer of two type I and two type II keratins. Heterodimer with KRT10. Two heterodimers of KRT1 and KRT10 form a heterotetramer. Forms a heterodimer with KRT14; the interaction is more abundant in the absence of KRT5. Interacts with PLEC isoform 1C, when in a heterodimer with KRT10. Interacts with ITGB1 in the presence of RACK1 and SRC, and with RACK1. Interacts with C1QBP; the association represents a cell surface kininogen receptor. Interacts with EPPK1; interaction is dependent of higher-order structure of intermediate filament. Post-translationally, undergoes deimination of some arginine residues (citrullination). As to expression, expressed in the infundibular regions of the ear, the interfollicular epidermis of the back, in the interscale regions containing hair follicles in the tail, and in the soles of the footpads (at protein level).

Its subcellular location is the cell membrane. It localises to the cytoplasm. May regulate the activity of kinases such as PKC and SRC via binding to integrin beta-1 (ITB1) and the receptor of activated protein C kinase 1 (RACK1). In complex with C1QBP is a high affinity receptor for kininogen-1/HMWK. In Mus musculus (Mouse), this protein is Keratin, type II cytoskeletal 1 (Krt1).